The primary structure comprises 438 residues: UDP-N-acetylmuramoylalanine--D-glutamate ligase (438 aa).

Residue 112–118 (GSNGKST) participates in ATP binding.

Belongs to the MurCDEF family.

The protein resides in the cytoplasm. The enzyme catalyses UDP-N-acetyl-alpha-D-muramoyl-L-alanine + D-glutamate + ATP = UDP-N-acetyl-alpha-D-muramoyl-L-alanyl-D-glutamate + ADP + phosphate + H(+). It functions in the pathway cell wall biogenesis; peptidoglycan biosynthesis. Cell wall formation. Catalyzes the addition of glutamate to the nucleotide precursor UDP-N-acetylmuramoyl-L-alanine (UMA). The sequence is that of UDP-N-acetylmuramoylalanine--D-glutamate ligase from Salmonella typhi.